Reading from the N-terminus, the 185-residue chain is Elongation factor P (185 aa).

The protein belongs to the elongation factor P family.

It localises to the cytoplasm. The protein operates within protein biosynthesis; polypeptide chain elongation. In terms of biological role, involved in peptide bond synthesis. Stimulates efficient translation and peptide-bond synthesis on native or reconstituted 70S ribosomes in vitro. Probably functions indirectly by altering the affinity of the ribosome for aminoacyl-tRNA, thus increasing their reactivity as acceptors for peptidyl transferase. The sequence is that of Elongation factor P from Microcystis aeruginosa (strain NIES-843 / IAM M-2473).